Reading from the N-terminus, the 234-residue chain is C2H2-type zinc-finger transcription factor clz7 (234 aa).

Disordered regions lie at residues 45 to 99 (RPEG…SRVD) and 118 to 154 (SAQP…NGTA). 2 stretches are compositionally biased toward low complexity: residues 66–77 (SQSSNTSPTSES) and 140–154 (SSGT…NGTA). The C2H2-type 1; degenerate zinc finger occupies 159–184 (NRCWDHGCNGKKFLNHSNLVRHRREN). The C2H2-type 2; degenerate zinc finger occupies 191–223 (FICPMCGAYFSRSTARNQHLEKKSCNRVRRYSN).

The protein belongs to the GLI C2H2-type zinc-finger protein family.

The protein localises to the nucleus. In terms of biological role, transcription factor that probably regulates the expression of the gene cluster that mediates the biosynthesis of squalestatin S1 (SQS1, also known as zaragozic acid A), a heavily oxidized fungal polyketide that offers potent cholesterol lowering activity by targeting squalene synthase (SS). In Cochliobolus lunatus (Filamentous fungus), this protein is C2H2-type zinc-finger transcription factor clz7.